Consider the following 81-residue polypeptide: Omega-conotoxin-like TxO4 (81 aa).

An N-terminal signal peptide occupies residues 1 to 22 (MKLTCVVIVAVLFLTAWTFVTA). The propeptide occupies 23 to 52 (VPHSSNALENLYLKARHEMENPEASKLNTR). Cystine bridges form between C55/C72, C62/C76, and C71/C80. The residue at position 70 (P70) is a 4-hydroxyproline; partial. 6'-bromotryptophan; partial is present on W75.

This sequence belongs to the conotoxin O1 superfamily. Post-translationally, txO4 is found with and without hydroxyproline and these two forms have a bromotryptophan. Truncated TxO4 is found with and without bromotryptophan, and these two forms have no hydroxyproline. As to expression, expressed by the venom duct.

The protein localises to the secreted. In terms of biological role, omega-conotoxins act at presynaptic membranes, they bind and block voltage-gated calcium channels (Cav). This chain is Omega-conotoxin-like TxO4, found in Conus textile (Cloth-of-gold cone).